A 255-amino-acid polypeptide reads, in one-letter code: Small ribosomal subunit protein eS1 (255 aa).

The segment covering M1–K18 has biased composition (basic residues). The interval M1–D28 is disordered. At A2 the chain carries N-acetylalanine; partial. Basic and acidic residues predominate over residues R19–D28.

Belongs to the eukaryotic ribosomal protein eS1 family. Component of the small ribosomal subunit. Mature ribosomes consist of a small (40S) and a large (60S) subunit. The 40S subunit contains about 33 different proteins and 1 molecule of RNA (18S). The 60S subunit contains about 49 different proteins and 3 molecules of RNA (25S, 5.8S and 5S).

It is found in the cytoplasm. The polypeptide is Small ribosomal subunit protein eS1 (Ajellomyces capsulatus (strain G186AR / H82 / ATCC MYA-2454 / RMSCC 2432) (Darling's disease fungus)).